The following is a 722-amino-acid chain: Polyribonucleotide nucleotidyltransferase (722 aa).

Mg(2+) contacts are provided by Asp495 and Asp501. Positions 562-621 constitute a KH domain; that stretch reads PRLLSFRIDPELIGTVIGPGGRTIKGITERTNTKIDIEDGGIVTIASHDGVAAEEAQKII. One can recognise an S1 motif domain in the interval 631–699; the sequence is GEIFTGSITR…NRGRINLTLR (69 aa). The span at 701–711 shows a compositional bias: polar residues; that stretch reads VSQNNNDMNYP. Residues 701-722 form a disordered region; it reads VSQNNNDMNYPQPTPTPVAPLN. The segment covering 712–722 has biased composition (pro residues); it reads QPTPTPVAPLN.

It belongs to the polyribonucleotide nucleotidyltransferase family. Mg(2+) serves as cofactor.

The protein resides in the cytoplasm. It catalyses the reaction RNA(n+1) + phosphate = RNA(n) + a ribonucleoside 5'-diphosphate. In terms of biological role, involved in mRNA degradation. Catalyzes the phosphorolysis of single-stranded polyribonucleotides processively in the 3'- to 5'-direction. The sequence is that of Polyribonucleotide nucleotidyltransferase from Prochlorococcus marinus (strain MIT 9211).